Consider the following 71-residue polypeptide: Phosphatidylinositol N-acetylglucosaminyltransferase subunit Y (71 aa).

Position 1 (M1) is a topological domain, cytoplasmic. Residues 2 to 21 (FFSLPVLTVLIPLVSLTGLL) traverse the membrane as a helical segment. Residues 22–44 (YSASVEEDFPNGCTSTASLCFYS) lie on the Lumenal side of the membrane. A helical transmembrane segment spans residues 45 to 65 (LLLPITLPVYVFFHLWTWMGL). Residues 66–71 (KLFRHN) lie on the Cytoplasmic side of the membrane.

Component of the glycosylphosphatidylinositol-N-acetylglucosaminyltransferase (GPI-GnT) complex composed at least by PIGA, PIGC, PIGH, PIGP, PIGQ, PIGY and DPM2.

It localises to the endoplasmic reticulum membrane. It functions in the pathway glycolipid biosynthesis; glycosylphosphatidylinositol-anchor biosynthesis. Its function is as follows. Part of the glycosylphosphatidylinositol-N-acetylglucosaminyltransferase (GPI-GnT) complex that catalyzes the transfer of N-acetylglucosamine from UDP-N-acetylglucosamine to phosphatidylinositol and participates in the first step of GPI biosynthesis. May act by regulating the catalytic subunit PIGA. The chain is Phosphatidylinositol N-acetylglucosaminyltransferase subunit Y from Xenopus tropicalis (Western clawed frog).